A 422-amino-acid polypeptide reads, in one-letter code: Glucose-1-phosphate adenylyltransferase (422 aa).

Residues Y109, G175, 190–191 (EK), and S208 contribute to the alpha-D-glucose 1-phosphate site.

This sequence belongs to the bacterial/plant glucose-1-phosphate adenylyltransferase family. In terms of assembly, homotetramer.

The catalysed reaction is alpha-D-glucose 1-phosphate + ATP + H(+) = ADP-alpha-D-glucose + diphosphate. The protein operates within glycan biosynthesis; glycogen biosynthesis. Involved in the biosynthesis of ADP-glucose, a building block required for the elongation reactions to produce glycogen. Catalyzes the reaction between ATP and alpha-D-glucose 1-phosphate (G1P) to produce pyrophosphate and ADP-Glc. This is Glucose-1-phosphate adenylyltransferase from Shewanella amazonensis (strain ATCC BAA-1098 / SB2B).